A 154-amino-acid polypeptide reads, in one-letter code: MSAYLFLLMLVLIGVISNNQSVIIASSVLLIIKAIGFGDQLFPTLASKGISWGVTIITIAVLVPIATGDIGFKELWNSIKGPVGIVAFASGMFVAIAAGQGVQLMRVDPVVTTALLAGTILAVGFMKGIPVGPLVGAGIAALILGGYQVIEKWF.

5 helical membrane-spanning segments follow: residues 5-25, 52-72, 82-102, 107-127, and 129-149; these read LFLL…VIIA, WGVT…DIGF, PVGI…GQGV, VDPV…GFMK, and IPVG…GYQV.

It belongs to the UPF0756 family.

Its subcellular location is the cell membrane. The sequence is that of UPF0756 membrane protein EAT1b_0668 from Exiguobacterium sp. (strain ATCC BAA-1283 / AT1b).